Consider the following 134-residue polypeptide: MYYTSYRSQVFGVARIFASFNDTFVHVTDLSGKETIARVTGGMKVKADRDESSPYAAMLAAQDVAAKCKEVGITAVHIKLRATGGTKTKTPGPGGQSALRALARSGLRIGRIEDVTPVPSDSTRRKGGRRGRRL.

The segment at 114 to 134 is disordered; it reads DVTPVPSDSTRRKGGRRGRRL. Positions 125–134 are enriched in basic residues; it reads RKGGRRGRRL.

It belongs to the universal ribosomal protein uS11 family.

This Candida albicans (Yeast) protein is Small ribosomal subunit protein uS11 (RPS14).